The following is a 168-amino-acid chain: Pollen allergen Cro s 1 (168 aa).

A signal peptide spans 1–26 (MGKCQAVFLLVGALCVLSLAGVANAA). Intrachain disulfides connect Cys38–Cys109, Cys41–Cys153, and Cys62–Cys97. N-linked (GlcNAc...) asparagine glycosylation is present at Asn64.

This sequence belongs to the Ole e I family. Expressed in pollen.

It is found in the secreted. This chain is Pollen allergen Cro s 1, found in Crocus sativus (Saffron).